The chain runs to 256 residues: tRNA (guanine-N(1)-)-methyltransferase (256 aa).

Residues Gly117 and 137 to 142 (LGDFVL) contribute to the S-adenosyl-L-methionine site.

The protein belongs to the RNA methyltransferase TrmD family. In terms of assembly, homodimer.

The protein resides in the cytoplasm. It catalyses the reaction guanosine(37) in tRNA + S-adenosyl-L-methionine = N(1)-methylguanosine(37) in tRNA + S-adenosyl-L-homocysteine + H(+). Functionally, specifically methylates guanosine-37 in various tRNAs. This chain is tRNA (guanine-N(1)-)-methyltransferase, found in Methylibium petroleiphilum (strain ATCC BAA-1232 / LMG 22953 / PM1).